We begin with the raw amino-acid sequence, 314 residues long: Ribosomal protein L11 methyltransferase (314 aa).

S-adenosyl-L-methionine-binding residues include Thr-163, Gly-184, Asp-206, and Asn-248.

It belongs to the methyltransferase superfamily. PrmA family.

It localises to the cytoplasm. It carries out the reaction L-lysyl-[protein] + 3 S-adenosyl-L-methionine = N(6),N(6),N(6)-trimethyl-L-lysyl-[protein] + 3 S-adenosyl-L-homocysteine + 3 H(+). Functionally, methylates ribosomal protein L11. The protein is Ribosomal protein L11 methyltransferase of Lactobacillus delbrueckii subsp. bulgaricus (strain ATCC 11842 / DSM 20081 / BCRC 10696 / JCM 1002 / NBRC 13953 / NCIMB 11778 / NCTC 12712 / WDCM 00102 / Lb 14).